Reading from the N-terminus, the 215-residue chain is Octanoyltransferase (215 aa).

In terms of domain architecture, BPL/LPL catalytic spans 31-206 (TTAPDEIWLV…QLVKHLDYAE (176 aa)). Substrate contacts are provided by residues 70-77 (RGGQVTYH), 137-139 (SLG), and 150-152 (GLA). Catalysis depends on cysteine 168, which acts as the Acyl-thioester intermediate.

Belongs to the LipB family.

The protein resides in the cytoplasm. It catalyses the reaction octanoyl-[ACP] + L-lysyl-[protein] = N(6)-octanoyl-L-lysyl-[protein] + holo-[ACP] + H(+). It participates in protein modification; protein lipoylation via endogenous pathway; protein N(6)-(lipoyl)lysine from octanoyl-[acyl-carrier-protein]: step 1/2. Its function is as follows. Catalyzes the transfer of endogenously produced octanoic acid from octanoyl-acyl-carrier-protein onto the lipoyl domains of lipoate-dependent enzymes. Lipoyl-ACP can also act as a substrate although octanoyl-ACP is likely to be the physiological substrate. The sequence is that of Octanoyltransferase from Pseudomonas fluorescens (strain Pf0-1).